An 86-amino-acid polypeptide reads, in one-letter code: UPF0125 protein bbp_234 (86 aa).

Belongs to the UPF0125 (RnfH) family.

In Buchnera aphidicola subsp. Baizongia pistaciae (strain Bp), this protein is UPF0125 protein bbp_234.